A 251-amino-acid polypeptide reads, in one-letter code: Acidic leucine-rich nuclear phosphoprotein 32 family member B (251 aa).

LRR repeat units follow at residues 16 to 40 (PAAVRELVLDNCKSNDGKIEGLTAE), 43 to 64 (NLEFLSLINVGLISVSNLPKLP), and 65 to 84 (KLKKLELSENRIFGGLDMLA). K86 carries the N6-acetyllysine modification. One copy of the LRR 4 repeat lies at 89 to 110 (NLTHLNLSGNKLKDISTLEPLK). The LRRCT domain occupies 123 to 161 (CEVTNLNDYRESVFKLLPQLTYLDGYDREDQEAPDSDAE). Positions 149 to 233 (DREDQEAPDS…DEDEDEEEEE (85 aa)) are enriched in acidic residues. Positions 149 to 251 (DREDQEAPDS…RETDDEGEDD (103 aa)) are disordered. Residue S158 is modified to Phosphoserine. A compositionally biased stretch (basic and acidic residues) spans 234–244 (GGKGEKRKRET). A Nuclear localization signal motif is present at residues 239–242 (KRKR). T244 is modified (phosphothreonine).

It belongs to the ANP32 family. In terms of assembly, interacts with histones H3 and H4. Interacts with KLF5; this interaction induces promoter region-specific histone incorporation and inhibition of histone acetylation by ANP32B. (Microbial infection) Interacts with Sendai virus protein M. As to quaternary structure, (Microbial infection) Interacts with Measles virus protein M. In terms of assembly, (Microbial infection) Interacts with Hendra virus protein M; this interaction promotes nuclear localization of M. (Microbial infection) Interacts with influenza virus B protein PB2; this interaction strongly supports influenza B virus replication. In terms of processing, some glutamate residues are glycylated by TTLL8. This modification occurs exclusively on glutamate residues and results in a glycine chain on the gamma-carboxyl group. Post-translationally, directly cleaved by caspase-3/CASP3. In terms of tissue distribution, expressed in heart, lung, pancreas, prostate and in spleen, thymus and placenta.

The protein resides in the nucleus. It is found in the cytoplasm. Functionally, multifunctional protein that is involved in the regulation of many processes including cell proliferation, apoptosis, cell cycle progression or transcription. Regulates the proliferation of neuronal stem cells, differentiation of leukemic cells and progression from G1 to S phase of the cell cycle. As negative regulator of caspase-3-dependent apoptosis, may act as an antagonist of ANP32A in regulating tissue homeostasis. Exhibits histone chaperone properties, able to recruit histones to certain promoters, thus regulating the transcription of specific genes. Also plays an essential role in the nucleocytoplasmic transport of specific mRNAs via the uncommon nuclear mRNA export receptor XPO1/CRM1. Participates in the regulation of adequate adaptive immune responses by acting on mRNA expression and cell proliferation. In terms of biological role, (Microbial infection) Plays an essential role in influenza A and B viral genome replication. Also plays a role in foamy virus mRNA export from the nucleus to the cytoplasm. The protein is Acidic leucine-rich nuclear phosphoprotein 32 family member B (ANP32B) of Homo sapiens (Human).